A 424-amino-acid polypeptide reads, in one-letter code: O-methyltransferase bfoD (424 aa).

Residue aspartate 275 coordinates S-adenosyl-L-methionine. Histidine 326 (proton acceptor) is an active-site residue.

This sequence belongs to the class I-like SAM-binding methyltransferase superfamily. Cation-independent O-methyltransferase family.

The protein operates within secondary metabolite biosynthesis. Cytochrome P450 monooxygenase; part of the gene cluster that mediates the biosynthesis of bifonsecin B, a dimeric gamma-naphthopyrone. The first step in the biosynthesis of bifonsecin B is the production of gamma-naphthopyrone precursor YWA1 by the non-reducing polyketide synthase albA, via condensation of one acetyl-CoA starter unit with 6 malonyl-CoA units. YWA1 is then methylated by bfoE at position C-6 to yield foncesin which is further methylated at position C-8 by bfoD to produce fonsecin B. A key enzyme in the biosynthetic pathway is the cytochrome P450 monooxygenase bfoB which catalyzes the oxidative dimerization of fonsecin B to bifonsecin B. Bfob also catalyzes the oxidative dimerization of rubrofusarin B into nigerone. The stereoselectivity of bfoB is influenced by the two natural monomeric substrates; homodimerization of fonsecin B yields a stereochemically pure biaryl, M-foncerine B, while rubrofusarin B yields a mixture of enantiomers M- and P-nigerone. In Aspergillus brasiliensis (strain CBS 101740 / IMI 381727 / IBT 21946), this protein is O-methyltransferase bfoD.